The following is a 351-amino-acid chain: Glycerol-3-phosphate dehydrogenase [NAD(P)+] (351 aa).

4 residues coordinate NADPH: Ser-18, Trp-19, Arg-38, and Lys-122. Sn-glycerol 3-phosphate contacts are provided by Lys-122, Gly-153, and Ser-155. Residue Ala-157 participates in NADPH binding. Positions 208, 261, 271, 272, and 273 each coordinate sn-glycerol 3-phosphate. The Proton acceptor role is filled by Lys-208. Arg-272 provides a ligand contact to NADPH. Position 297 (Glu-297) interacts with NADPH.

This sequence belongs to the NAD-dependent glycerol-3-phosphate dehydrogenase family.

The protein resides in the cytoplasm. It carries out the reaction sn-glycerol 3-phosphate + NAD(+) = dihydroxyacetone phosphate + NADH + H(+). The catalysed reaction is sn-glycerol 3-phosphate + NADP(+) = dihydroxyacetone phosphate + NADPH + H(+). It participates in membrane lipid metabolism; glycerophospholipid metabolism. Functionally, catalyzes the reduction of the glycolytic intermediate dihydroxyacetone phosphate (DHAP) to sn-glycerol 3-phosphate (G3P), the key precursor for phospholipid synthesis. This chain is Glycerol-3-phosphate dehydrogenase [NAD(P)+], found in Bordetella pertussis (strain Tohama I / ATCC BAA-589 / NCTC 13251).